The following is a 457-amino-acid chain: Exodeoxyribonuclease 7 large subunit (457 aa).

Belongs to the XseA family. In terms of assembly, heterooligomer composed of large and small subunits.

Its subcellular location is the cytoplasm. It carries out the reaction Exonucleolytic cleavage in either 5'- to 3'- or 3'- to 5'-direction to yield nucleoside 5'-phosphates.. In terms of biological role, bidirectionally degrades single-stranded DNA into large acid-insoluble oligonucleotides, which are then degraded further into small acid-soluble oligonucleotides. The chain is Exodeoxyribonuclease 7 large subunit from Enterobacter sp. (strain 638).